Here is a 621-residue protein sequence, read N- to C-terminus: Chaperone protein DnaK (621 aa).

Thr179 bears the Phosphothreonine; by autocatalysis mark. A compositionally biased stretch (polar residues) spans 583–605; the sequence is SQVQDTQGAAQGQSQGNPQQTAD. The interval 583–621 is disordered; it reads SQVQDTQGAAQGQSQGNPQQTADNRGKVVDAEIVDENKE. Positions 606-621 are enriched in basic and acidic residues; that stretch reads NRGKVVDAEIVDENKE.

This sequence belongs to the heat shock protein 70 family.

Functionally, acts as a chaperone. This is Chaperone protein DnaK from Endomicrobium trichonymphae.